The chain runs to 504 residues: Maturase K (504 aa).

This sequence belongs to the intron maturase 2 family. MatK subfamily.

The protein localises to the plastid. Its subcellular location is the chloroplast. Its function is as follows. Usually encoded in the trnK tRNA gene intron. Probably assists in splicing its own and other chloroplast group II introns. The protein is Maturase K of Adansonia digitata (Baobab tree).